The following is a 133-amino-acid chain: Large ribosomal subunit protein bL20 (133 aa).

The protein belongs to the bacterial ribosomal protein bL20 family.

Its function is as follows. Binds directly to 23S ribosomal RNA and is necessary for the in vitro assembly process of the 50S ribosomal subunit. It is not involved in the protein synthesizing functions of that subunit. The protein is Large ribosomal subunit protein bL20 of Bartonella bacilliformis (strain ATCC 35685 / KC583 / Herrer 020/F12,63).